A 590-amino-acid polypeptide reads, in one-letter code: Aspartate--tRNA(Asp/Asn) ligase (590 aa).

E176 is a binding site for L-aspartate. The interval 200-203 (QLFK) is aspartate. L-aspartate-binding residues include R222 and H451. 222-224 (RDE) is a binding site for ATP. E485 is a binding site for ATP. R492 contributes to the L-aspartate binding site. 537–540 (GIDR) serves as a coordination point for ATP.

The protein belongs to the class-II aminoacyl-tRNA synthetase family. Type 1 subfamily. As to quaternary structure, homodimer.

The protein localises to the cytoplasm. It carries out the reaction tRNA(Asx) + L-aspartate + ATP = L-aspartyl-tRNA(Asx) + AMP + diphosphate. Its function is as follows. Aspartyl-tRNA synthetase with relaxed tRNA specificity since it is able to aspartylate not only its cognate tRNA(Asp) but also tRNA(Asn). Reaction proceeds in two steps: L-aspartate is first activated by ATP to form Asp-AMP and then transferred to the acceptor end of tRNA(Asp/Asn). This is Aspartate--tRNA(Asp/Asn) ligase from Ehrlichia canis (strain Jake).